The following is a 227-amino-acid chain: ATP-dependent dethiobiotin synthetase BioD (227 aa).

Residue 13–18 (NIGKTI) coordinates ATP. Threonine 17 provides a ligand contact to Mg(2+). Residue lysine 38 is part of the active site. Serine 42 contacts substrate. Residues aspartate 55, 117-120 (EGFG), 177-178 (NH), 206-208 (PFI), and asparagine 213 each bind ATP. Mg(2+) contacts are provided by aspartate 55 and glutamate 117.

This sequence belongs to the dethiobiotin synthetase family. As to quaternary structure, homodimer. Mg(2+) is required as a cofactor.

The protein localises to the cytoplasm. It catalyses the reaction (7R,8S)-7,8-diammoniononanoate + CO2 + ATP = (4R,5S)-dethiobiotin + ADP + phosphate + 3 H(+). Its pathway is cofactor biosynthesis; biotin biosynthesis; biotin from 7,8-diaminononanoate: step 1/2. Functionally, catalyzes a mechanistically unusual reaction, the ATP-dependent insertion of CO2 between the N7 and N8 nitrogen atoms of 7,8-diaminopelargonic acid (DAPA, also called 7,8-diammoniononanoate) to form a ureido ring. The sequence is that of ATP-dependent dethiobiotin synthetase BioD from Wigglesworthia glossinidia brevipalpis.